The primary structure comprises 138 residues: Mu-like prophage FluMu G protein 2 (138 aa).

It to phage Mu protein G.

This is Mu-like prophage FluMu G protein 2 from Haemophilus influenzae (strain ATCC 51907 / DSM 11121 / KW20 / Rd).